Reading from the N-terminus, the 223-residue chain is Sigma non-opioid intracellular receptor 1 (223 aa).

Residues 1–7 (MAVLSSR) lie on the Lumenal side of the membrane. Residues 8–29 (AMRAALGLAVLAVVIQLLRTWL) form a helical membrane-spanning segment. The Cytoplasmic segment spans residues 30–223 (SSKSYLFNQK…HTYLSELGLS (194 aa)). An important for ligand-binding region spans residues 98-105 (SLTEYILL). The interval 176 to 223 (FIPSTMGFALADTIFSTQDFCTLFYTFRIYARCLLLETHTYLSELGLS) is C-terminal hydrophobic region.

The protein belongs to the ERG2 family. In terms of assembly, homotrimer.

It is found in the nucleus inner membrane. The protein localises to the nucleus outer membrane. It localises to the nucleus envelope. Its subcellular location is the cytoplasmic vesicle. The protein resides in the endoplasmic reticulum membrane. It is found in the membrane. Its function is as follows. May function in lipid transport from the endoplasmic reticulum and be involved in a wide array of cellular functions probably through regulation of the biogenesis of lipid microdomains at the plasma membrane. May regulate calcium efflux at the endoplasmic reticulum. The sequence is that of Sigma non-opioid intracellular receptor 1 (SIGMAR1) from Taricha granulosa (Roughskin newt).